A 393-amino-acid chain; its full sequence is Sialyltransferase-like protein 1 (393 aa).

Residues 1 to 8 (MKRPLRRP) are Cytoplasmic-facing. A helical; Signal-anchor for type II membrane protein membrane pass occupies residues 9-27 (FAVLLFVVLCAAASFPSVL). Over 28–393 (RRSVGPAPVL…IAVPPVVFYH (366 aa)) the chain is Lumenal. N49, N212, and N258 each carry an N-linked (GlcNAc...) asparagine glycan.

The protein belongs to the glycosyltransferase 29 family.

It localises to the golgi apparatus membrane. Possesses sialyltransferase-like activity in vitro. Transfers sialic acid to the oligosaccharide Gal-beta-1,3-GalNAc and to glycoproteins such as asialofetuin, alpha-1-acid glycoprotein (NeuAc-alpha-2,3-Gal-beta-1,3-GalNAc-) and andasialo-alpha-1-acid glycoprotein. The transferred sialic acid is linked to galactose of Gal-beta-1,3-GalNAc through alpha-2,6-linkage. The chain is Sialyltransferase-like protein 1 from Oryza sativa subsp. indica (Rice).